Reading from the N-terminus, the 266-residue chain is uncharacterized protein (266 aa).

This is an uncharacterized protein from Methanocaldococcus jannaschii (strain ATCC 43067 / DSM 2661 / JAL-1 / JCM 10045 / NBRC 100440) (Methanococcus jannaschii).